Reading from the N-terminus, the 152-residue chain is SsrA-binding protein (152 aa).

This sequence belongs to the SmpB family.

The protein localises to the cytoplasm. In terms of biological role, required for rescue of stalled ribosomes mediated by trans-translation. Binds to transfer-messenger RNA (tmRNA), required for stable association of tmRNA with ribosomes. tmRNA and SmpB together mimic tRNA shape, replacing the anticodon stem-loop with SmpB. tmRNA is encoded by the ssrA gene; the 2 termini fold to resemble tRNA(Ala) and it encodes a 'tag peptide', a short internal open reading frame. During trans-translation Ala-aminoacylated tmRNA acts like a tRNA, entering the A-site of stalled ribosomes, displacing the stalled mRNA. The ribosome then switches to translate the ORF on the tmRNA; the nascent peptide is terminated with the 'tag peptide' encoded by the tmRNA and targeted for degradation. The ribosome is freed to recommence translation, which seems to be the essential function of trans-translation. The protein is SsrA-binding protein of Rickettsia prowazekii (strain Madrid E).